A 265-amino-acid chain; its full sequence is GTP cyclohydrolase FolE2 (265 aa).

The protein belongs to the GTP cyclohydrolase IV family.

The enzyme catalyses GTP + H2O = 7,8-dihydroneopterin 3'-triphosphate + formate + H(+). It participates in cofactor biosynthesis; 7,8-dihydroneopterin triphosphate biosynthesis; 7,8-dihydroneopterin triphosphate from GTP: step 1/1. In terms of biological role, converts GTP to 7,8-dihydroneopterin triphosphate. The chain is GTP cyclohydrolase FolE2 from Bordetella petrii (strain ATCC BAA-461 / DSM 12804 / CCUG 43448).